The primary structure comprises 356 residues: S-adenosylmethionine:tRNA ribosyltransferase-isomerase (356 aa).

It belongs to the QueA family. Monomer.

The protein localises to the cytoplasm. It carries out the reaction 7-aminomethyl-7-carbaguanosine(34) in tRNA + S-adenosyl-L-methionine = epoxyqueuosine(34) in tRNA + adenine + L-methionine + 2 H(+). It functions in the pathway tRNA modification; tRNA-queuosine biosynthesis. Functionally, transfers and isomerizes the ribose moiety from AdoMet to the 7-aminomethyl group of 7-deazaguanine (preQ1-tRNA) to give epoxyqueuosine (oQ-tRNA). This chain is S-adenosylmethionine:tRNA ribosyltransferase-isomerase, found in Histophilus somni (strain 2336) (Haemophilus somnus).